Reading from the N-terminus, the 91-residue chain is MPRSLKKGPFIDAHLFAKVEKAVESNSRKPIKTWSRRSMILPQMVGLTISVHNGRTHVPVIISEQMVGHKLGEFAPTRTYRGHGFDKKAKK.

It belongs to the universal ribosomal protein uS19 family.

Its function is as follows. Protein S19 forms a complex with S13 that binds strongly to the 16S ribosomal RNA. In Psychrobacter sp. (strain PRwf-1), this protein is Small ribosomal subunit protein uS19.